The following is an 827-amino-acid chain: Beta-galactosidase 1 (827 aa).

A signal peptide spans 1–25 (MMGRRGSSWCRWWVALLVLAVAADA). The active-site Proton donor is the glutamate 187. 2 N-linked (GlcNAc...) asparagine glycosylation sites follow: asparagine 198 and asparagine 249. Catalysis depends on glutamate 259, which acts as the Nucleophile. Residues asparagine 260, asparagine 366, asparagine 392, asparagine 502, asparagine 520, asparagine 578, asparagine 586, and asparagine 615 are each glycosylated (N-linked (GlcNAc...) asparagine). The 82-residue stretch at 746–827 (GEAGDAVTLS…SGVLTVQATC (82 aa)) folds into the SUEL-type lectin domain.

This sequence belongs to the glycosyl hydrolase 35 family.

The protein resides in the secreted. It is found in the extracellular space. The protein localises to the apoplast. It catalyses the reaction Hydrolysis of terminal non-reducing beta-D-galactose residues in beta-D-galactosides.. The chain is Beta-galactosidase 1 from Oryza sativa subsp. japonica (Rice).